Here is a 247-residue protein sequence, read N- to C-terminus: 2,3-bisphosphoglycerate-dependent phosphoglycerate mutase (247 aa).

Residues R8–N15, T21–G22, R60, E87–Y90, K98, R114–R115, and G183–N184 each bind substrate. Catalysis depends on H9, which acts as the Tele-phosphohistidine intermediate. Catalysis depends on E87, which acts as the Proton donor/acceptor.

Belongs to the phosphoglycerate mutase family. BPG-dependent PGAM subfamily.

The enzyme catalyses (2R)-2-phosphoglycerate = (2R)-3-phosphoglycerate. It functions in the pathway carbohydrate degradation; glycolysis; pyruvate from D-glyceraldehyde 3-phosphate: step 3/5. Catalyzes the interconversion of 2-phosphoglycerate and 3-phosphoglycerate. This chain is 2,3-bisphosphoglycerate-dependent phosphoglycerate mutase, found in Prosthecochloris aestuarii (strain DSM 271 / SK 413).